The primary structure comprises 92 residues: uncharacterized protein (92 aa).

This is an uncharacterized protein from Archaeoglobus fulgidus (strain ATCC 49558 / DSM 4304 / JCM 9628 / NBRC 100126 / VC-16).